Reading from the N-terminus, the 429-residue chain is Enolase (429 aa).

Q162 serves as a coordination point for (2R)-2-phosphoglycerate. Catalysis depends on E204, which acts as the Proton donor. Mg(2+) contacts are provided by D241, E288, and D315. (2R)-2-phosphoglycerate contacts are provided by K340, R369, S370, and K391. K340 serves as the catalytic Proton acceptor.

This sequence belongs to the enolase family. Mg(2+) is required as a cofactor.

Its subcellular location is the cytoplasm. The protein resides in the secreted. The protein localises to the cell surface. The enzyme catalyses (2R)-2-phosphoglycerate = phosphoenolpyruvate + H2O. The protein operates within carbohydrate degradation; glycolysis; pyruvate from D-glyceraldehyde 3-phosphate: step 4/5. Functionally, catalyzes the reversible conversion of 2-phosphoglycerate (2-PG) into phosphoenolpyruvate (PEP). It is essential for the degradation of carbohydrates via glycolysis. The protein is Enolase of Christiangramia forsetii (strain DSM 17595 / CGMCC 1.15422 / KT0803) (Gramella forsetii).